The sequence spans 496 residues: Flt3-interacting zinc finger protein 1 (496 aa).

The residue at position 1 (methionine 1) is an N-acetylmethionine. C2H2-type zinc fingers lie at residues 23-45 (FHCSECGKSFRYRSDLRRHFARH), 51-73 (HACPRCGKGFKHSFNLANHLRSH), 79-101 (YRCSACPKGFRDSTGLLHHQVVH), 107-130 (YCCLVCELRFSSRSSLGRHLKRQH), 200-222 (FACGACARRFDHGRELAAHWAAH), and 228-250 (FKCPRCERDFNAPALLERHKLTH). The disordered stretch occupies residues 250 to 280 (HDLQGPGAPPAQAWAAGPGAGPETAGEGTAA). Low complexity predominate over residues 259-280 (PAQAWAAGPGAGPETAGEGTAA). 5 consecutive C2H2-type zinc fingers follow at residues 331 to 352 (YQCDCGTFFASAAALASHLEAH), 358 to 381 (YGCGHCGALYAALAALEEHRRVSH), 414 to 436 (FGCSECEKLFRSPRDLERHVLVH), 442 to 464 (FPCLECGKFFRHECYLKRHRLLH), and 470 to 492 (FPCHICGKGFITLSNLSRHLKLH). The tract at residues 378–412 (RVSHGEGGGEEAATAAREREPASGEPPSGSGRGKK) is disordered.

As to quaternary structure, interacts with FLT3 cytoplasmic catalytic domain, following receptor stimulation, in a kinase-independent manner. Does not interact with other structurally related receptor tyrosine kinases, including KIT, CSF1R and PDGFR. Interacts with NRL. In terms of tissue distribution, widely expressed.

Its subcellular location is the cytoplasm. The protein resides in the nucleus. Functionally, may be a transcriptional repressor of NRL function in photoreceptors. Does not repress CRX-mediated transactivation. In Homo sapiens (Human), this protein is Flt3-interacting zinc finger protein 1 (FIZ1).